Reading from the N-terminus, the 99-residue chain is DNA-directed RNA polymerase subunit omega (99 aa).

The segment covering 1-10 (MSSTSAASAA) has biased composition (low complexity). The interval 1–20 (MSSTSAASAAGQGALPAYDT) is disordered.

The protein belongs to the RNA polymerase subunit omega family. The RNAP catalytic core consists of 2 alpha, 1 beta, 1 beta' and 1 omega subunit. When a sigma factor is associated with the core the holoenzyme is formed, which can initiate transcription.

It catalyses the reaction RNA(n) + a ribonucleoside 5'-triphosphate = RNA(n+1) + diphosphate. Functionally, promotes RNA polymerase assembly. Latches the N- and C-terminal regions of the beta' subunit thereby facilitating its interaction with the beta and alpha subunits. This chain is DNA-directed RNA polymerase subunit omega, found in Rhodococcus erythropolis (strain PR4 / NBRC 100887).